The primary structure comprises 272 residues: 2-succinyl-6-hydroxy-2,4-cyclohexadiene-1-carboxylate synthase (272 aa).

This sequence belongs to the AB hydrolase superfamily. MenH family. Monomer.

It catalyses the reaction 5-enolpyruvoyl-6-hydroxy-2-succinyl-cyclohex-3-ene-1-carboxylate = (1R,6R)-6-hydroxy-2-succinyl-cyclohexa-2,4-diene-1-carboxylate + pyruvate. It participates in quinol/quinone metabolism; 1,4-dihydroxy-2-naphthoate biosynthesis; 1,4-dihydroxy-2-naphthoate from chorismate: step 3/7. The protein operates within quinol/quinone metabolism; menaquinone biosynthesis. In terms of biological role, catalyzes a proton abstraction reaction that results in 2,5-elimination of pyruvate from 2-succinyl-5-enolpyruvyl-6-hydroxy-3-cyclohexene-1-carboxylate (SEPHCHC) and the formation of 2-succinyl-6-hydroxy-2,4-cyclohexadiene-1-carboxylate (SHCHC). This chain is 2-succinyl-6-hydroxy-2,4-cyclohexadiene-1-carboxylate synthase, found in Yersinia pestis (strain Pestoides F).